The primary structure comprises 183 residues: Ran guanine nucleotide release factor (183 aa).

Positions 23–66 (ELRQIPDNQEVFAHSQTDQSIIIELLEYQSQVQDADAARYHFED) are interaction with RAN.

It belongs to the MOG1 family. As to quaternary structure, monomer. Interacts with ran.

It localises to the nucleus. The protein localises to the cytoplasm. The protein resides in the perinuclear region. It is found in the cell membrane. Functionally, may regulate the intracellular trafficking of RAN. Promotes guanine nucleotide release from RAN and inhibits binding of new GTP. Plays a role in the regulation of the levels of GTP-bound RAN in the nucleus. Required for normal expression of the ion channel hcn4 and for normal expression of the cardiac transcription factors nkx2.5, gata4 and hand2 during embryonic development. Required for normal embryonic heart development and normal heart rate. In Danio rerio (Zebrafish), this protein is Ran guanine nucleotide release factor.